Reading from the N-terminus, the 757-residue chain is Polyribonucleotide nucleotidyltransferase (757 aa).

Mg(2+) contacts are provided by Asp488 and Asp494. In terms of domain architecture, KH spans 555 to 614; that stretch reads PKLYTMKINAEKIRDVIGKGGAVIRALTEETGCQINIEEDGTITIAATDAAKADIAKRRI. The region spanning 624–692 is the S1 motif domain; that stretch reads GKIYEGPVTK…ERGRVKLSMK (69 aa). The interval 693 to 757 is disordered; it reads VLAERPAPGS…ADTGSGQRVG (65 aa). Over residues 720–736 the composition is skewed to basic and acidic residues; the sequence is ALAEREPRREMRDHGHP. The segment covering 737 to 747 has biased composition (low complexity); sequence PSEQQQQQSPP.

This sequence belongs to the polyribonucleotide nucleotidyltransferase family. It depends on Mg(2+) as a cofactor.

Its subcellular location is the cytoplasm. The enzyme catalyses RNA(n+1) + phosphate = RNA(n) + a ribonucleoside 5'-diphosphate. In terms of biological role, involved in mRNA degradation. Catalyzes the phosphorolysis of single-stranded polyribonucleotides processively in the 3'- to 5'-direction. The chain is Polyribonucleotide nucleotidyltransferase from Verminephrobacter eiseniae (strain EF01-2).